A 203-amino-acid polypeptide reads, in one-letter code: Small ribosomal subunit protein uS4 (203 aa).

In terms of domain architecture, S4 RNA-binding spans 93 to 156 (RRLDNVVYRL…LKVPAILEAV (64 aa)).

It belongs to the universal ribosomal protein uS4 family. Part of the 30S ribosomal subunit. Contacts protein S5. The interaction surface between S4 and S5 is involved in control of translational fidelity.

Functionally, one of the primary rRNA binding proteins, it binds directly to 16S rRNA where it nucleates assembly of the body of the 30S subunit. In terms of biological role, with S5 and S12 plays an important role in translational accuracy. In Streptococcus pneumoniae serotype 2 (strain D39 / NCTC 7466), this protein is Small ribosomal subunit protein uS4.